We begin with the raw amino-acid sequence, 351 residues long: Calcium homeostasis modulator 1 (351 aa).

The Cytoplasmic portion of the chain corresponds to 1–20 (MDKFRMMFQFLQSNQESFMN). A central pore region spans residues 9–36 (QFLQSNQESFMNGICGIMALASAQMYSS). The helical transmembrane segment at 21 to 36 (GICGIMALASAQMYSS) threads the bilayer. The Extracellular segment spans residues 37 to 48 (FEFSCPCMPEYN). 2 disulfide bridges follow: cysteine 41–cysteine 126 and cysteine 43–cysteine 160. Residues 49–71 (YTYGIGLLIIPPIWFFLLGFVLN) form a helical membrane-spanning segment. The interval 62–69 (WFFLLGFV) is phospholipid-binding. Residues 72 to 98 (NNVSVLAEEWKRPTGRRTKDPSVLRYM) are Cytoplasmic-facing. The chain crosses the membrane as a helical span at residues 99-124 (LCSITQRSLIAPAVWVSVTLMDGKSF). Cysteine 100 carries the S-palmitoyl cysteine lipid modification. Positions 104-116 (QRSLIAPAVWVSV) are phospholipid-binding. The Extracellular segment spans residues 125–177 (LCAFSINLDIEKFGNASLVIGMTETEKLKFLARIPCKDLFEDNEVRVAATRYI). Asparagine 139 carries N-linked (GlcNAc...) asparagine glycosylation. Residues 178-203 (KCISQACGWMFLLMMTFTAFLIRAIR) traverse the membrane as a helical segment. Positions 189–199 (LLMMTFTAFLI) are phospholipid-binding. Over 204 to 351 (PCFTQAAFLK…KEWAVYYSKV (148 aa)) the chain is Cytoplasmic. Cysteine 205 carries the S-palmitoyl cysteine lipid modification. Residues 259–281 (HRHQSKDTSDAEEEEKQRSDEDK) are disordered. Basic and acidic residues predominate over residues 263 to 281 (SKDTSDAEEEEKQRSDEDK).

This sequence belongs to the CALHM family. In terms of assembly, oligomerizes to form hexamers and octamers. Does not form gap junctions. Associates with CALHM3 as a pore-forming subunit in a hetero-hexameric channel complex. Post-translationally, N-glycosylated. Palmitoylated.

Its subcellular location is the cell membrane. It is found in the endoplasmic reticulum membrane. It localises to the basolateral cell membrane. It catalyses the reaction ATP(in) = ATP(out). It carries out the reaction Ca(2+)(in) = Ca(2+)(out). The catalysed reaction is Mg(2+)(in) = Mg(2+)(out). The enzyme catalyses Na(+)(in) = Na(+)(out). It catalyses the reaction K(+)(in) = K(+)(out). It carries out the reaction Li(+)(in) = Li(+)(out). The catalysed reaction is Rb(+)(in) = Rb(+)(out). The enzyme catalyses Cs(+)(in) = Cs(+)(out). It catalyses the reaction chloride(in) = chloride(out). Activated in response to membrane depolarization and low extracellular Ca(2+) concentration. Inhibited by ruthenium red. Pore-forming subunit of a voltage-gated ion channel. Has poor ion selectivity and forms a wide pore that mediates permeation of small ions including Ca(2+), Na(+), K(+) and Cl(-), as well as larger ions such as ATP(4-). In Oryzias latipes (Japanese rice fish), this protein is Calcium homeostasis modulator 1.